The following is a 208-amino-acid chain: Small ribosomal subunit protein uS4 (208 aa).

Positions 95 to 157 (RRIDNVVYRA…DRLKKLVRSN (63 aa)) constitute an S4 RNA-binding domain.

This sequence belongs to the universal ribosomal protein uS4 family. Part of the 30S ribosomal subunit. Contacts protein S5. The interaction surface between S4 and S5 is involved in control of translational fidelity.

Its function is as follows. One of the primary rRNA binding proteins, it binds directly to 16S rRNA where it nucleates assembly of the body of the 30S subunit. With S5 and S12 plays an important role in translational accuracy. This is Small ribosomal subunit protein uS4 from Borrelia turicatae (strain 91E135).